A 271-amino-acid chain; its full sequence is L-aspartate dehydrogenase (271 aa).

Alanine 124 and asparagine 192 together coordinate NAD(+). The active site involves histidine 222.

Belongs to the L-aspartate dehydrogenase family.

The enzyme catalyses L-aspartate + NADP(+) + H2O = oxaloacetate + NH4(+) + NADPH + H(+). It carries out the reaction L-aspartate + NAD(+) + H2O = oxaloacetate + NH4(+) + NADH + H(+). It participates in cofactor biosynthesis; NAD(+) biosynthesis; iminoaspartate from L-aspartate (dehydrogenase route): step 1/1. Specifically catalyzes the NAD or NADP-dependent dehydrogenation of L-aspartate to iminoaspartate. The polypeptide is L-aspartate dehydrogenase (Methanosarcina mazei (strain ATCC BAA-159 / DSM 3647 / Goe1 / Go1 / JCM 11833 / OCM 88) (Methanosarcina frisia)).